Consider the following 417-residue polypeptide: MAVFTPPSGNSNSTDHTHTQDDHDKDDNDIKKFYIRPSLGLKLWGPLVPAPDNLPGLYTLITIQSAVGFFALWRLRRLYKLPPPRRIATGTHSDLSFGELPSEMIVNGKTKIKKDIADFPTLNRFSTTHGDIVLAPPPIIPRQSRFVSVRKLLWGLFGSLLLSQSLLELTRLNFLKYDPWCDEMKSVRDKKFFNNIVKYYHEGIDPTKIKVKDAMNGTPLSTNIPEVKQSVALARAQVEAQNPIIKWFGPLEYKPMSFNEYLNRMEFHLDMFEFFQNKRNIRENSIELINSISHNPQSSSTGLEGLSESKKLHLQNVEKRLHFLASSGDSISAPVKKRSSTTLSRGVILPHDTKGPQDIDLDTIRSLYDPWMTLALETSLSIKFIPTTMPSHTKTPTSTDQPLPGPTPKALTNEKTH.

The disordered stretch occupies residues 1-28 (MAVFTPPSGNSNSTDHTHTQDDHDKDDN). The Mitochondrial intermembrane segment spans residues 1–56 (MAVFTPPSGNSNSTDHTHTQDDHDKDDNDIKKFYIRPSLGLKLWGPLVPAPDNLPG). Residues 15-28 (DHTHTQDDHDKDDN) are compositionally biased toward basic and acidic residues. A helical membrane pass occupies residues 57–73 (LYTLITIQSAVGFFALW). Residues 74–151 (RLRRLYKLPP…RQSRFVSVRK (78 aa)) are Mitochondrial matrix-facing. Residues 152 to 169 (LLWGLFGSLLLSQSLLEL) form a helical membrane-spanning segment. At 170-417 (TRLNFLKYDP…PKALTNEKTH (248 aa)) the chain is on the mitochondrial intermembrane side. The segment covering 391 to 401 (SHTKTPTSTDQ) has biased composition (polar residues). Positions 391–417 (SHTKTPTSTDQPLPGPTPKALTNEKTH) are disordered.

It belongs to the MGR1 family. Component of the mitochondrial inner membrane i-AAA protease supercomplex composed of MGR1, MGR3 and YME1. With MGR3, forms a subcomplex that binds to YME1 and to substrates to facilitate proteolysis. Interacts directly with YME1.

It localises to the mitochondrion inner membrane. Component of the mitochondrial inner membrane i-AAA protease supercomplex required for mitochondrial inner membrane protein turnover. Together with MGR3, functions in an adapter complex that targets substrates to the i-AAA protease for degradation. Required for growth of cells lacking the mitochondrial genome. The polypeptide is Mitochondrial inner membrane i-AAA protease supercomplex subunit MGR1 (MGR1) (Saccharomyces cerevisiae (strain ATCC 204508 / S288c) (Baker's yeast)).